We begin with the raw amino-acid sequence, 514 residues long: Putative exoglucanase type C (514 aa).

The N-terminal stretch at 1 to 17 is a signal peptide; it reads MYRIVATASALIAAARA. Positions 18–439 are catalytic; that stretch reads QQVCSLNTET…RDVPNSKVSF (422 aa). Residue Glu-229 is the Nucleophile of the active site. Glu-234 serves as the catalytic Proton donor. An N-linked (GlcNAc...) asparagine glycan is attached at Asn-287. Residues 408 to 424 show a composition bias toward polar residues; it reads STKVGSQRGSCATTSGK. Disordered stretches follow at residues 408–433 and 448–485; these read STKV…RDVP and GSTY…QWGQ. Residues 440 to 482 are linker; the sequence is SNIKFGPIGSTYKSDGTTPNPPASSSTTGSSTPTNPPAGSVDQ. The segment covering 462–479 has biased composition (low complexity); the sequence is ASSSTTGSSTPTNPPAGS. The CBM1 domain maps to 478-514; it reads GSVDQWGQCGGQNYSGPTTCKSPFTCKKINDFYSQCQ. 2 cysteine pairs are disulfide-bonded: Cys-486–Cys-503 and Cys-497–Cys-513. The N-linked (GlcNAc...) asparagine glycan is linked to Asn-490.

This sequence belongs to the glycosyl hydrolase 7 (cellulase C) family.

The catalysed reaction is Hydrolysis of (1-&gt;4)-beta-D-glucosidic linkages in cellulose and cellotetraose, releasing cellobiose from the non-reducing ends of the chains.. The sequence is that of Putative exoglucanase type C from Fusarium oxysporum (Fusarium vascular wilt).